The sequence spans 1171 residues: DNA-directed RNA polymerase subunit beta (1171 aa).

This sequence belongs to the RNA polymerase beta chain family. As to quaternary structure, the RNAP catalytic core consists of 2 alpha, 1 beta, 1 beta' and 1 omega subunit. When a sigma factor is associated with the core the holoenzyme is formed, which can initiate transcription.

It carries out the reaction RNA(n) + a ribonucleoside 5'-triphosphate = RNA(n+1) + diphosphate. Functionally, DNA-dependent RNA polymerase catalyzes the transcription of DNA into RNA using the four ribonucleoside triphosphates as substrates. This chain is DNA-directed RNA polymerase subunit beta, found in Arthrobacter sp. (strain FB24).